The following is a 109-amino-acid chain: Flagellar hook-basal body complex protein FliE 2 (109 aa).

The protein belongs to the FliE family.

The protein localises to the bacterial flagellum basal body. The sequence is that of Flagellar hook-basal body complex protein FliE 2 (fliE2) from Bradyrhizobium diazoefficiens (strain JCM 10833 / BCRC 13528 / IAM 13628 / NBRC 14792 / USDA 110).